The chain runs to 404 residues: Odorant receptor 67c (404 aa).

Topologically, residues 1–45 are cytoplasmic; the sequence is METAKDNTARTFMELMRVPVQFYRTIGEDIYAHRSTNPLKSLLFK. A helical membrane pass occupies residues 46–66; that stretch reads IYLYAGFINFNLLVIGELVFF. Residues 67-79 are Extracellular-facing; that stretch reads YNSIQDFETIRLA. Residues 80 to 100 traverse the membrane as a helical segment; that stretch reads IAVAPCIGFSLVADFKQAAMI. Over 101 to 139 the chain is Cytoplasmic; sequence RGKKTLIMLLDDLENMHPKTLAKQMEYKLPDFEKTMKRV. The helical transmembrane segment at 140–160 threads the bilayer; it reads INIFTFLCLAYTTTFSFYPAI. The Extracellular segment spans residues 161–204; it reads KASVKFNFLGYDTFDRNFGFLIWFPFDATRNNLIYWIMYWDIAH. A helical membrane pass occupies residues 205–225; that stretch reads GAYLAGIAFLCADLLLVVVIT. The Cytoplasmic segment spans residues 226 to 277; sequence QICMHFNYISMRLEDHPCNSNEDKENIEFLIGIIRYHDKCLKLCEHVNDLYS. The helical transmembrane segment at 278–298 threads the bilayer; the sequence is FSLLLNFLMASMQICFIAFQV. Over 299 to 304 the chain is Extracellular; sequence TESTVE. A helical membrane pass occupies residues 305 to 326; sequence VIIIYCIFLMTSMVQVFMVCYY. The Cytoplasmic segment spans residues 327–373; the sequence is GDTLIAASLKVGDAAYNQKWFQCSKSYCTMLKLLIMRSQKPASIRPP. A helical transmembrane segment spans residues 374-394; it reads TFPPISLVTYMKVISMSYQFF. Over 395 to 404 the chain is Extracellular; it reads ALLRTTYSNN.

This sequence belongs to the insect chemoreceptor superfamily. Heteromeric odorant receptor channel (TC 1.A.69) family. Or49a subfamily. As to quaternary structure, interacts with Orco. Complexes exist early in the endomembrane system in olfactory sensory neurons (OSNs), coupling these complexes to the conserved ciliary trafficking pathway. Expressed in olfactory sensory neurons in the antenna.

The protein resides in the cell membrane. Odorant receptor which mediates acceptance or avoidance behavior, depending on its substrates. The odorant receptor repertoire encodes a large collection of odor stimuli that vary widely in identity, intensity, and duration. May form a complex with Orco to form odorant-sensing units, providing sensitive and prolonged odorant signaling and calcium permeability. In Drosophila melanogaster (Fruit fly), this protein is Odorant receptor 67c (Or67c).